Reading from the N-terminus, the 209-residue chain is High frequency lysogenization protein HflD homolog (209 aa).

The protein belongs to the HflD family.

Its subcellular location is the cytoplasm. The protein localises to the cell inner membrane. This chain is High frequency lysogenization protein HflD homolog, found in Saccharophagus degradans (strain 2-40 / ATCC 43961 / DSM 17024).